The primary structure comprises 520 residues: Transactivator/viroplasmin protein (520 aa).

The disordered stretch occupies residues 487 to 520; sequence KDASADSGPKDGPPPTRSIVEKEDVPTTSSKQVD.

Belongs to the caulimoviridae viroplasmin family.

The protein localises to the host cytoplasm. Functionally, enhances the ribosomal termination-reinitiation event leading to the translation of major open reading frames on the polycistronic viral RNAs. This chain is Transactivator/viroplasmin protein, found in Arabidopsis thaliana (Mouse-ear cress).